We begin with the raw amino-acid sequence, 186 residues long: Meiotically up-regulated gene 163 protein (186 aa).

It is found in the mitochondrion. Functionally, has a role in meiosis. The polypeptide is Meiotically up-regulated gene 163 protein (mug163) (Schizosaccharomyces pombe (strain 972 / ATCC 24843) (Fission yeast)).